The sequence spans 311 residues: N-acetylmuramic acid 6-phosphate etherase (311 aa).

The region spanning isoleucine 64–lysine 227 is the SIS domain. Glutamate 92 (proton donor) is an active-site residue. The active site involves glutamate 123.

Belongs to the GCKR-like family. MurNAc-6-P etherase subfamily. As to quaternary structure, homodimer.

It catalyses the reaction N-acetyl-D-muramate 6-phosphate + H2O = N-acetyl-D-glucosamine 6-phosphate + (R)-lactate. It participates in amino-sugar metabolism; N-acetylmuramate degradation. In terms of biological role, specifically catalyzes the cleavage of the D-lactyl ether substituent of MurNAc 6-phosphate, producing GlcNAc 6-phosphate and D-lactate. The protein is N-acetylmuramic acid 6-phosphate etherase of Prochlorococcus marinus (strain SARG / CCMP1375 / SS120).